Here is a 244-residue protein sequence, read N- to C-terminus: Type III pantothenate kinase (244 aa).

12–19 contacts ATP; the sequence is VVGNTHVR. Residues Tyr-79 and 83–86 contribute to the substrate site; that span reads GLDR. The active-site Proton acceptor is Asp-85. Asp-105 contacts K(+). An ATP-binding site is contributed by Thr-108. Substrate is bound at residue Thr-163.

Belongs to the type III pantothenate kinase family. As to quaternary structure, homodimer. The cofactor is NH4(+). Requires K(+) as cofactor.

It is found in the cytoplasm. The enzyme catalyses (R)-pantothenate + ATP = (R)-4'-phosphopantothenate + ADP + H(+). The protein operates within cofactor biosynthesis; coenzyme A biosynthesis; CoA from (R)-pantothenate: step 1/5. Functionally, catalyzes the phosphorylation of pantothenate (Pan), the first step in CoA biosynthesis. The sequence is that of Type III pantothenate kinase from Synechococcus sp. (strain JA-3-3Ab) (Cyanobacteria bacterium Yellowstone A-Prime).